Here is a 415-residue protein sequence, read N- to C-terminus: von Willebrand factor A domain-containing protein 1 (415 aa).

The N-terminal stretch at 1–18 (MLFWTAFSMALSLRLALA) is a signal peptide. Residues 34 to 209 (DLLFLLDSSA…IIARELRGSI (176 aa)) enclose the VWFA domain. A phosphoserine mark is found at S74, S80, and S93. Fibronectin type-III domains are found at residues 214–305 (QPQQ…LQEE) and 307–403 (GPER…TRAP). Residue N264 is glycosylated (N-linked (GlcNAc...) asparagine). A disulfide bond links C369 and C393. The tract at residues 391-415 (KACTASGARTRAPQSMRPEAGPREP) is disordered.

As to quaternary structure, homodimer or homomultimer; disulfide-linked. Interacts with HSPG2. Post-translationally, N-glycosylated. In terms of tissue distribution, expressed at high levels in the chondrocytes. Detected in the vasculature of neural tissues, in basement membrane structures of the peripheral nervous system, in the apical ectodermal ridge of developing limb buds, and in skeletal and cardiac muscle (at protein level).

The protein resides in the secreted. Its subcellular location is the extracellular space. The protein localises to the extracellular matrix. It localises to the basement membrane. Its function is as follows. Promotes matrix assembly. Involved in the organization of skeletal muscles and in the formation of neuromuscular junctions. The protein is von Willebrand factor A domain-containing protein 1 (Vwa1) of Mus musculus (Mouse).